Consider the following 276-residue polypeptide: Large ribosomal subunit protein uL2 (276 aa).

Residues 224–276 form a disordered region; that stretch reads VMNPVDHPHGGGEGKAPIGRKSPMTPWGKPTLGYKTRKKKNKSDKFIIRRRKK. A compositionally biased stretch (basic residues) spans 258–276; sequence KTRKKKNKSDKFIIRRRKK.

The protein belongs to the universal ribosomal protein uL2 family. In terms of assembly, part of the 50S ribosomal subunit. Forms a bridge to the 30S subunit in the 70S ribosome.

Functionally, one of the primary rRNA binding proteins. Required for association of the 30S and 50S subunits to form the 70S ribosome, for tRNA binding and peptide bond formation. It has been suggested to have peptidyltransferase activity; this is somewhat controversial. Makes several contacts with the 16S rRNA in the 70S ribosome. The chain is Large ribosomal subunit protein uL2 from Geobacillus thermodenitrificans (strain NG80-2).